Here is a 368-residue protein sequence, read N- to C-terminus: Probable dual-specificity RNA methyltransferase RlmN (368 aa).

The active-site Proton acceptor is the glutamate 100. Residues 106–344 form the Radical SAM core domain; it reads QHYGLSVCVT…CVVRQEHGTD (239 aa). An intrachain disulfide couples cysteine 113 to cysteine 349. 3 residues coordinate [4Fe-4S] cluster: cysteine 120, cysteine 124, and cysteine 127. S-adenosyl-L-methionine contacts are provided by residues 172–173, serine 204, 227–229, and asparagine 305; these read GE and SLH. The active-site S-methylcysteine intermediate is cysteine 349.

The protein belongs to the radical SAM superfamily. RlmN family. It depends on [4Fe-4S] cluster as a cofactor.

It is found in the cytoplasm. The enzyme catalyses adenosine(2503) in 23S rRNA + 2 reduced [2Fe-2S]-[ferredoxin] + 2 S-adenosyl-L-methionine = 2-methyladenosine(2503) in 23S rRNA + 5'-deoxyadenosine + L-methionine + 2 oxidized [2Fe-2S]-[ferredoxin] + S-adenosyl-L-homocysteine. It catalyses the reaction adenosine(37) in tRNA + 2 reduced [2Fe-2S]-[ferredoxin] + 2 S-adenosyl-L-methionine = 2-methyladenosine(37) in tRNA + 5'-deoxyadenosine + L-methionine + 2 oxidized [2Fe-2S]-[ferredoxin] + S-adenosyl-L-homocysteine. In terms of biological role, specifically methylates position 2 of adenine 2503 in 23S rRNA and position 2 of adenine 37 in tRNAs. The polypeptide is Probable dual-specificity RNA methyltransferase RlmN (Streptococcus agalactiae serotype Ia (strain ATCC 27591 / A909 / CDC SS700)).